Reading from the N-terminus, the 289-residue chain is GTPase Era (289 aa).

The Era-type G domain occupies 2–167; that stretch reads KSGFVSIIGR…LDEICKLLPE (166 aa). The tract at residues 10–17 is G1; that stretch reads GRTNAGKS. GTP is bound at residue 10-17; sequence GRTNAGKS. Residues 36-40 form a G2 region; the sequence is NATRR. Positions 57–60 are G3; the sequence is DTPG. GTP is bound by residues 57 to 61 and 116 to 119; these read DTPGL and TKVD. The interval 116–119 is G4; sequence TKVD. The segment at 146-148 is G5; it reads FST. A KH type-2 domain is found at 194–274; that stretch reads IYENLSDEIP…FLKLDVVVKK (81 aa).

Belongs to the TRAFAC class TrmE-Era-EngA-EngB-Septin-like GTPase superfamily. Era GTPase family. In terms of assembly, monomer.

It localises to the cytoplasm. It is found in the cell inner membrane. Functionally, an essential GTPase that binds both GDP and GTP, with rapid nucleotide exchange. Plays a role in 16S rRNA processing and 30S ribosomal subunit biogenesis and possibly also in cell cycle regulation and energy metabolism. This is GTPase Era from Campylobacter concisus (strain 13826).